The sequence spans 649 residues: DNA mismatch repair protein MutL (649 aa).

The protein belongs to the DNA mismatch repair MutL/HexB family.

In terms of biological role, this protein is involved in the repair of mismatches in DNA. It is required for dam-dependent methyl-directed DNA mismatch repair. May act as a 'molecular matchmaker', a protein that promotes the formation of a stable complex between two or more DNA-binding proteins in an ATP-dependent manner without itself being part of a final effector complex. The protein is DNA mismatch repair protein MutL of Streptococcus pneumoniae (strain JJA).